The chain runs to 127 residues: Aspartate 1-decarboxylase (127 aa).

Residue S25 is the Schiff-base intermediate with substrate; via pyruvic acid of the active site. The residue at position 25 (S25) is a Pyruvic acid (Ser). T57 contributes to the substrate binding site. The active-site Proton donor is the Y58. 73–75 (GAA) lines the substrate pocket.

The protein belongs to the PanD family. In terms of assembly, heterooctamer of four alpha and four beta subunits. Pyruvate is required as a cofactor. In terms of processing, is synthesized initially as an inactive proenzyme, which is activated by self-cleavage at a specific serine bond to produce a beta-subunit with a hydroxyl group at its C-terminus and an alpha-subunit with a pyruvoyl group at its N-terminus.

The protein resides in the cytoplasm. It catalyses the reaction L-aspartate + H(+) = beta-alanine + CO2. Its pathway is cofactor biosynthesis; (R)-pantothenate biosynthesis; beta-alanine from L-aspartate: step 1/1. Catalyzes the pyruvoyl-dependent decarboxylation of aspartate to produce beta-alanine. This Carboxydothermus hydrogenoformans (strain ATCC BAA-161 / DSM 6008 / Z-2901) protein is Aspartate 1-decarboxylase.